We begin with the raw amino-acid sequence, 351 residues long: DNA polymerase IV (351 aa).

A UmuC domain is found at 4–185 (IIHIDMDCFF…LPLAKIPGVG (182 aa)). Positions 8 and 103 each coordinate Mg(2+). The active site involves glutamate 104.

Belongs to the DNA polymerase type-Y family. In terms of assembly, monomer. The cofactor is Mg(2+).

The protein resides in the cytoplasm. The enzyme catalyses DNA(n) + a 2'-deoxyribonucleoside 5'-triphosphate = DNA(n+1) + diphosphate. Functionally, poorly processive, error-prone DNA polymerase involved in untargeted mutagenesis. Copies undamaged DNA at stalled replication forks, which arise in vivo from mismatched or misaligned primer ends. These misaligned primers can be extended by PolIV. Exhibits no 3'-5' exonuclease (proofreading) activity. May be involved in translesional synthesis, in conjunction with the beta clamp from PolIII. The protein is DNA polymerase IV of Salmonella paratyphi A (strain ATCC 9150 / SARB42).